The primary structure comprises 367 residues: Putative 12-oxophytodienoate reductase 11 (367 aa).

FMN is bound by residues 26 to 28, Ala-59, and Gln-101; that span reads PLT. 178–181 serves as a coordination point for substrate; sequence HGAH. Residue Tyr-183 is the Proton donor of the active site. Arg-230 contributes to the FMN binding site. Arg-270 lines the substrate pocket. FMN contacts are provided by residues Gly-300 and 321 to 322; that span reads GR.

The protein belongs to the NADH:flavin oxidoreductase/NADH oxidase family. FMN serves as cofactor.

Its function is as follows. Putative oxophytodienoate reductase that may be involved in the biosynthesis or metabolism of oxylipin signaling molecules. In Oryza sativa subsp. japonica (Rice), this protein is Putative 12-oxophytodienoate reductase 11 (OPR11).